The primary structure comprises 454 residues: Probable diacyglycerol O-acyltransferase tgs2 (454 aa).

The Proton acceptor role is filled by H139.

This sequence belongs to the long-chain O-acyltransferase family.

The enzyme catalyses an acyl-CoA + a 1,2-diacyl-sn-glycerol = a triacyl-sn-glycerol + CoA. It catalyses the reaction a long chain fatty alcohol + a fatty acyl-CoA = a wax ester + CoA. It functions in the pathway glycerolipid metabolism; triacylglycerol biosynthesis. Catalyzes the terminal and only committed step in triacylglycerol synthesis by using diacylglycerol and fatty acyl CoA as substrates. Required for storage lipid synthesis. This Mycobacterium tuberculosis (strain CDC 1551 / Oshkosh) protein is Probable diacyglycerol O-acyltransferase tgs2 (tgs2).